The sequence spans 266 residues: Vitamin B12-binding protein (266 aa).

The N-terminal stretch at 1–22 (MAKSLFRALVALSFLAPLWLNA) is a signal peptide. The Fe/B12 periplasmic-binding domain occupies 25-266 (RVITLSPANT…QLCNALSQVD (242 aa)). Residues Tyr-50 and 242–246 (DWFER) each bind cyanocob(III)alamin. Cys-183 and Cys-259 are oxidised to a cystine.

The protein belongs to the BtuF family. The complex is composed of two ATP-binding proteins (BtuD), two transmembrane proteins (BtuC) and a solute-binding protein (BtuF).

The protein resides in the periplasm. Functionally, part of the ABC transporter complex BtuCDF involved in vitamin B12 import. Binds vitamin B12 and delivers it to the periplasmic surface of BtuC. The chain is Vitamin B12-binding protein from Escherichia coli O6:H1 (strain CFT073 / ATCC 700928 / UPEC).